Here is a 228-residue protein sequence, read N- to C-terminus: MKQKYLFIASMALAGCGSMSESNKYWIQYKDIDQSVKEVSFWSREQFHSPSDVKGTVYQRDNLTHLATSTPLGEIYHIYDVNHIPMNVIFLDTKTQRSLNPQNAQDMAQLSKATQFDFYEFGKGRIAHAVFSAKTGLCQDFKSKRGVALKMATNYYTDASYKGYYVSVIHAIIRHNGQHTDFAYTPAFSIADTKALAMTQALEKQDGERVAQMNLKEKVTLLTNIVCQ.

The first 15 residues, 1 to 15, serve as a signal peptide directing secretion; the sequence is MKQKYLFIASMALAG. Cys16 carries the N-palmitoyl cysteine lipid modification. Residue Cys16 is the site of S-diacylglycerol cysteine attachment.

It to P.multocida PM0015.

The protein resides in the cell membrane. This is an uncharacterized protein from Pasteurella multocida (strain Pm70).